A 334-amino-acid polypeptide reads, in one-letter code: N-acetyl-gamma-glutamyl-phosphate reductase (334 aa).

Residue C154 is part of the active site.

Belongs to the NAGSA dehydrogenase family. Type 1 subfamily.

Its subcellular location is the cytoplasm. It carries out the reaction N-acetyl-L-glutamate 5-semialdehyde + phosphate + NADP(+) = N-acetyl-L-glutamyl 5-phosphate + NADPH + H(+). It functions in the pathway amino-acid biosynthesis; L-arginine biosynthesis; N(2)-acetyl-L-ornithine from L-glutamate: step 3/4. Catalyzes the NADPH-dependent reduction of N-acetyl-5-glutamyl phosphate to yield N-acetyl-L-glutamate 5-semialdehyde. This chain is N-acetyl-gamma-glutamyl-phosphate reductase, found in Buchnera aphidicola subsp. Schizaphis graminum (strain Sg).